Consider the following 591-residue polypeptide: Putative F-box protein At1g32140 (591 aa).

Residues 2–49 (TMMSDLSLDLVEEILCRVPITSLKAVRSSCKLWNVLSKNRILCKTEAR) form the F-box domain. A compositionally biased stretch (basic residues) spans 567-581 (AGRKRKEKKTKRKSK). Residues 567-591 (AGRKRKEKKTKRKSKDKQMKLSNKV) are disordered.

The sequence is that of Putative F-box protein At1g32140 from Arabidopsis thaliana (Mouse-ear cress).